A 605-amino-acid chain; its full sequence is Kelch-like protein 26 (605 aa).

Positions 53–120 (LDVVLAIDNE…AYSSEVTLDL (68 aa)) constitute a BTB domain. The BACK domain maps to 155–256 (CLNIGQMATT…RSSELVDSVQ (102 aa)). Kelch repeat units follow at residues 300–351 (SLIT…VLDN), 352–403 (FVYV…VLDG), 404–450 (QLYA…TCGD), 452–498 (LYIS…SANN), 499–549 (RIYA…LLDK), and 551–598 (IYIV…PIIL).

May play a role in endo(sarco)plasmic reticulum (ER/SR) mitochondrial signaling. May be part of the ubiquitin-proteasome system (UPS) and affect ubiquitination and degradation of target substrates. This is Kelch-like protein 26 (klhl26) from Danio rerio (Zebrafish).